A 583-amino-acid polypeptide reads, in one-letter code: MAQDIKIMNLTKSSLEALNRNQMLSKKSSRKILKICMYAILTFAMCGVVLICLTAMSNSDGSLTQSGSHNQSGSLKGLSSTPGDGEILNKAEIETLRFIFSNYPHGNRDPTGDDVEKPADAALPNEEDQKVKIADAGKHIKLMKQYNEIVADMSEDNKEQLAKMLRELLKKKINERKKKREDPNGNNEEGKEVINISVPSFNYKRVSANQDDSDDEEEVSVAQIEGLFVNLKYASKFFNFMNKYKRSYKDINEQMEKYKNFKMNYLKIKKHNETNQMYKMKVNQFSDYSKKDFESYFRKLLPIPDHLKKKYVVPFSSMNNGKGKNVVTSSSGANLLADVPEILDYREKGIVHEPKDQGLCGSCWAFASVGNVECMYAKEHNKTILTLSEQEVVDCSKLNFGCDGGHPFYSFIYAIENGICMGDDYKYKAMDNLFCLNYRCKNKVTLSSVGGVKENELIRALNEVGPVSVNVGVTDDFSFYGGGIFNGTCTEELNHSVLLVGYGQVQSSKIFQEKNAYDDASGVTKKGALSYPSKADDGIQYYWIIKNSWSKFWGENGFMRISRNKEGDNVFCGIGVEVFYPIL.

Over 1-34 the chain is Cytoplasmic; sequence MAQDIKIMNLTKSSLEALNRNQMLSKKSSRKILK. The propeptide at 1 to 338 is activation peptide; it reads MAQDIKIMNL…SSSGANLLAD (338 aa). Residues 35 to 55 traverse the membrane as a helical; Signal-anchor for type II membrane protein segment; the sequence is ICMYAILTFAMCGVVLICLTA. The Lumenal segment spans residues 56–583; that stretch reads MSNSDGSLTQ…IGVEVFYPIL (528 aa). A compositionally biased stretch (polar residues) spans 62–82; the sequence is SLTQSGSHNQSGSLKGLSSTP. 2 disordered regions span residues 62–83 and 104–125; these read SLTQSGSHNQSGSLKGLSSTPG and PHGNRDPTGDDVEKPADAALPN. Asn70 carries an N-linked (GlcNAc...) asparagine glycan. The segment covering 106–119 has biased composition (basic and acidic residues); that stretch reads GNRDPTGDDVEKPA. N-linked (GlcNAc...) asparagine glycans are attached at residues Asn195 and Asn272. 3 disulfides stabilise this stretch: Cys360/Cys402, Cys395/Cys435, and Cys420/Cys440. Residue Cys363 is part of the active site. Residue Asn381 is glycosylated (N-linked (GlcNAc...) asparagine). Asn486 and Asn494 each carry an N-linked (GlcNAc...) asparagine glycan. Cys489 and Cys572 are joined by a disulfide. Active-site residues include His495 and Asn547.

The protein belongs to the peptidase C1 family.

The protein localises to the membrane. Cysteine protease. This is Vivapain-1 from Plasmodium vivax (strain Salvador I).